A 174-amino-acid polypeptide reads, in one-letter code: Ly6/PLAUR domain-containing protein 6 (174 aa).

Positions 1-22 (MEPWPLMAWGLMLTAITGWIKA) are cleaved as a signal peptide. Residues 47-141 (FKCFTCEDAP…PRNETDAIFS (95 aa)) form the UPAR/Ly6 domain. Cystine bridges form between Cys-49/Cys-77, Cys-52/Cys-61, Cys-70/Cys-96, Cys-102/Cys-121, Cys-107/Cys-118, and Cys-122/Cys-127. Asn-134 and Asn-147 each carry an N-linked (GlcNAc...) asparagine glycan. Ser-149 carries the GPI-anchor amidated serine lipid modification. Residues 150-174 (AQSTQTLPLLLLSVSITSLMLHSIN) constitute a propeptide, removed in mature form.

In terms of assembly, interacts with fzd8 and lrp6.

The protein resides in the cell membrane. It localises to the membrane raft. Functionally, acts as an important regulator of embryogenesis through its enhancement of Wnt/beta-catenin signaling. Positively regulates Wnt/beta-catenin signaling by ensuring phosphorylation of lrp6 specifically in plasma membrane rafts and its subsequent internalization into signaling-competent vesicles. Essential for the wnt8-mediated patterning of the mesoderm and neuroectoderm during gastrulation. This Danio rerio (Zebrafish) protein is Ly6/PLAUR domain-containing protein 6 (lypd6).